Reading from the N-terminus, the 389-residue chain is 2-aminoethylphosphonate--pyruvate transaminase 1 (389 aa).

At Lys196 the chain carries N6-(pyridoxal phosphate)lysine.

Belongs to the class-V pyridoxal-phosphate-dependent aminotransferase family. PhnW subfamily. In terms of assembly, homodimer. Pyridoxal 5'-phosphate is required as a cofactor.

It catalyses the reaction (2-aminoethyl)phosphonate + pyruvate = phosphonoacetaldehyde + L-alanine. Involved in phosphonate degradation. The sequence is that of 2-aminoethylphosphonate--pyruvate transaminase 1 from Paraburkholderia xenovorans (strain LB400).